Consider the following 347-residue polypeptide: Methylthioribose-1-phosphate isomerase (347 aa).

Residues 47–49 (RGA), arginine 90, and glutamine 199 each bind substrate. Aspartate 240 acts as the Proton donor in catalysis. 250–251 (NK) contributes to the substrate binding site.

This sequence belongs to the eIF-2B alpha/beta/delta subunits family. MtnA subfamily.

It carries out the reaction 5-(methylsulfanyl)-alpha-D-ribose 1-phosphate = 5-(methylsulfanyl)-D-ribulose 1-phosphate. The protein operates within amino-acid biosynthesis; L-methionine biosynthesis via salvage pathway; L-methionine from S-methyl-5-thio-alpha-D-ribose 1-phosphate: step 1/6. Its function is as follows. Catalyzes the interconversion of methylthioribose-1-phosphate (MTR-1-P) into methylthioribulose-1-phosphate (MTRu-1-P). The sequence is that of Methylthioribose-1-phosphate isomerase from Natranaerobius thermophilus (strain ATCC BAA-1301 / DSM 18059 / JW/NM-WN-LF).